A 70-amino-acid polypeptide reads, in one-letter code: Turripeptide Ici9.2 (70 aa).

An N-terminal signal peptide occupies residues 1-20 (MKVYCLLLVLLVGLVSQAQG). A Kazal-like domain is found at 21-70 (QLDKKCQTMCTMEYLPVCGSDGTTYPNKCTLTSTACVNQMDITVLHNGEC). 3 disulfide bridges follow: Cys-26-Cys-56, Cys-30-Cys-49, and Cys-38-Cys-70.

Belongs to the conopeptide P-like superfamily. Expressed by the venom duct.

Its subcellular location is the secreted. In terms of biological role, acts as a neurotoxin by inhibiting an ion channel. May also act as a serine protease inhibitor, since it possess the kazal serine protease inhibitor signature. The sequence is that of Turripeptide Ici9.2 from Iotyrris cingulifera (Sea snail).